A 427-amino-acid polypeptide reads, in one-letter code: Enolase (427 aa).

Gln-162 is a binding site for (2R)-2-phosphoglycerate. Residue Glu-204 is the Proton donor of the active site. Mg(2+)-binding residues include Asp-241, Glu-283, and Asp-310. The (2R)-2-phosphoglycerate site is built by Lys-335, Arg-364, Ser-365, and Lys-386. Catalysis depends on Lys-335, which acts as the Proton acceptor.

This sequence belongs to the enolase family. Mg(2+) is required as a cofactor.

It localises to the cytoplasm. Its subcellular location is the secreted. The protein localises to the cell surface. The enzyme catalyses (2R)-2-phosphoglycerate = phosphoenolpyruvate + H2O. It participates in carbohydrate degradation; glycolysis; pyruvate from D-glyceraldehyde 3-phosphate: step 4/5. Functionally, catalyzes the reversible conversion of 2-phosphoglycerate (2-PG) into phosphoenolpyruvate (PEP). It is essential for the degradation of carbohydrates via glycolysis. This Mycolicibacterium smegmatis (strain ATCC 700084 / mc(2)155) (Mycobacterium smegmatis) protein is Enolase.